We begin with the raw amino-acid sequence, 149 residues long: SsrA-binding protein (149 aa).

It belongs to the SmpB family.

It localises to the cytoplasm. Functionally, required for rescue of stalled ribosomes mediated by trans-translation. Binds to transfer-messenger RNA (tmRNA), required for stable association of tmRNA with ribosomes. tmRNA and SmpB together mimic tRNA shape, replacing the anticodon stem-loop with SmpB. tmRNA is encoded by the ssrA gene; the 2 termini fold to resemble tRNA(Ala) and it encodes a 'tag peptide', a short internal open reading frame. During trans-translation Ala-aminoacylated tmRNA acts like a tRNA, entering the A-site of stalled ribosomes, displacing the stalled mRNA. The ribosome then switches to translate the ORF on the tmRNA; the nascent peptide is terminated with the 'tag peptide' encoded by the tmRNA and targeted for degradation. The ribosome is freed to recommence translation, which seems to be the essential function of trans-translation. The chain is SsrA-binding protein from Wolbachia pipientis subsp. Culex pipiens (strain wPip).